A 184-amino-acid polypeptide reads, in one-letter code: MALPVSLLMALVVLSCHSSCSLGCDLPHTHSLGNTRVLMLLGQMRRISPFSCLKDRNDFGFPQEVFDGNQFRKPQAISAVHETIQQIFHLFSTDGSSAAWDESLLDKLYTGLYQQLTELEACLSQEVGVEETPLMNEDSLLAVRRYFQRIALYLQEKKYSPCAWEIVRAEIMRSFSSSTNLPQS.

Residues 1–23 form the signal peptide; sequence MALPVSLLMALVVLSCHSSCSLG. Disulfide bonds link Cys-24–Cys-122 and Cys-52–Cys-162.

The protein belongs to the alpha/beta interferon family.

It is found in the secreted. Functionally, produced by macrophages, IFN-alpha have antiviral activities. Interferon stimulates the production of two enzymes: a protein kinase and an oligoadenylate synthetase. The chain is Interferon alpha-3 from Equus caballus (Horse).